Here is a 1072-residue protein sequence, read N- to C-terminus: Carbamoyl phosphate synthase large chain (1072 aa).

Positions 1 to 401 (MPKRLDINTI…SLLKAVRSLE (401 aa)) are carboxyphosphate synthetic domain. ATP contacts are provided by Arg129, Arg169, Gly175, Gly176, Lys208, Ile210, Glu215, Gly241, Val242, His243, Gln284, and Glu298. Positions 133–327 (RTLMQELNEP…IAKLAAKIAV (195 aa)) constitute an ATP-grasp 1 domain. Residues Gln284, Glu298, and Asn300 each coordinate Mg(2+). Mn(2+) is bound by residues Gln284, Glu298, and Asn300. The oligomerization domain stretch occupies residues 402–546 (LGVYHLELEH…YSTYGDENES (145 aa)). The segment at 547 to 929 (VRTDRKSVVV…ALYKGLVASG (383 aa)) is carbamoyl phosphate synthetic domain. One can recognise an ATP-grasp 2 domain in the interval 671–861 (EAALTQLGIP…MANVATKVIL (191 aa)). ATP contacts are provided by Arg707, Arg746, Glu752, Gly777, Val778, His779, Ser780, Gln820, and Glu832. The Mg(2+) site is built by Gln820, Glu832, and Asn834. Residues Gln820, Glu832, and Asn834 each coordinate Mn(2+). The region spanning 930-1072 (INIPTHGSVI…QTKRHEVVHA (143 aa)) is the MGS-like domain. Positions 930–1072 (INIPTHGSVI…QTKRHEVVHA (143 aa)) are allosteric domain.

Belongs to the CarB family. Composed of two chains; the small (or glutamine) chain promotes the hydrolysis of glutamine to ammonia, which is used by the large (or ammonia) chain to synthesize carbamoyl phosphate. Tetramer of heterodimers (alpha,beta)4. Mg(2+) is required as a cofactor. Requires Mn(2+) as cofactor.

The catalysed reaction is hydrogencarbonate + L-glutamine + 2 ATP + H2O = carbamoyl phosphate + L-glutamate + 2 ADP + phosphate + 2 H(+). It carries out the reaction hydrogencarbonate + NH4(+) + 2 ATP = carbamoyl phosphate + 2 ADP + phosphate + 2 H(+). It functions in the pathway amino-acid biosynthesis; L-arginine biosynthesis; carbamoyl phosphate from bicarbonate: step 1/1. It participates in pyrimidine metabolism; UMP biosynthesis via de novo pathway; (S)-dihydroorotate from bicarbonate: step 1/3. Its function is as follows. Large subunit of the glutamine-dependent carbamoyl phosphate synthetase (CPSase). CPSase catalyzes the formation of carbamoyl phosphate from the ammonia moiety of glutamine, carbonate, and phosphate donated by ATP, constituting the first step of 2 biosynthetic pathways, one leading to arginine and/or urea and the other to pyrimidine nucleotides. The large subunit (synthetase) binds the substrates ammonia (free or transferred from glutamine from the small subunit), hydrogencarbonate and ATP and carries out an ATP-coupled ligase reaction, activating hydrogencarbonate by forming carboxy phosphate which reacts with ammonia to form carbamoyl phosphate. The protein is Carbamoyl phosphate synthase large chain of Bacillus cereus (strain G9842).